A 523-amino-acid chain; its full sequence is 2-hydroxyisoflavanone synthase (523 aa).

Residues 2-22 (LVELAITLLVIALFIHLRPTL) form a helical membrane-spanning segment. Cys450 contributes to the heme binding site.

Belongs to the cytochrome P450 family. It depends on heme as a cofactor.

The protein resides in the microsome membrane. It catalyses the reaction (2S)-liquiritigenin + reduced [NADPH--hemoprotein reductase] + O2 = (2R,3S)-2,4',7-trihydroxyisoflavanone + oxidized [NADPH--hemoprotein reductase] + H2O + H(+). It carries out the reaction (2S)-naringenin + reduced [NADPH--hemoprotein reductase] + O2 = 2-hydroxy-2,3-dihydrogenistein + oxidized [NADPH--hemoprotein reductase] + H2O + H(+). Its function is as follows. 2-hydroxyisoflavanone synthase, which catalyzes the hydroxylation associated with 1,2-aryl migration of flavanones. Converts liquiritigenin and naringenin into highly unstable precursors of the isoflavones daidzein and genistein. Acts only on substrates with (2S)-chirality. The polypeptide is 2-hydroxyisoflavanone synthase (CYP93C2) (Glycyrrhiza echinata (Licorice)).